The chain runs to 513 residues: ATP synthase subunit alpha (513 aa).

ATP is bound at residue 169–176 (GDRQTGKT).

The protein belongs to the ATPase alpha/beta chains family. F-type ATPases have 2 components, CF(1) - the catalytic core - and CF(0) - the membrane proton channel. CF(1) has five subunits: alpha(3), beta(3), gamma(1), delta(1), epsilon(1). CF(0) has three main subunits: a(1), b(2) and c(9-12). The alpha and beta chains form an alternating ring which encloses part of the gamma chain. CF(1) is attached to CF(0) by a central stalk formed by the gamma and epsilon chains, while a peripheral stalk is formed by the delta and b chains.

The protein localises to the cell inner membrane. It catalyses the reaction ATP + H2O + 4 H(+)(in) = ADP + phosphate + 5 H(+)(out). Its function is as follows. Produces ATP from ADP in the presence of a proton gradient across the membrane. The alpha chain is a regulatory subunit. This Mannheimia succiniciproducens (strain KCTC 0769BP / MBEL55E) protein is ATP synthase subunit alpha.